A 280-amino-acid polypeptide reads, in one-letter code: L-aspartate dehydrogenase (280 aa).

A134 and N202 together coordinate NAD(+). Residue H232 is part of the active site.

Belongs to the L-aspartate dehydrogenase family.

It carries out the reaction L-aspartate + NADP(+) + H2O = oxaloacetate + NH4(+) + NADPH + H(+). It catalyses the reaction L-aspartate + NAD(+) + H2O = oxaloacetate + NH4(+) + NADH + H(+). It participates in cofactor biosynthesis; NAD(+) biosynthesis; iminoaspartate from L-aspartate (dehydrogenase route): step 1/1. Functionally, specifically catalyzes the NAD or NADP-dependent dehydrogenation of L-aspartate to iminoaspartate. The chain is L-aspartate dehydrogenase from Bradyrhizobium diazoefficiens (strain JCM 10833 / BCRC 13528 / IAM 13628 / NBRC 14792 / USDA 110).